The sequence spans 384 residues: 8-amino-7-oxononanoate synthase (384 aa).

Residue Arg-21 participates in substrate binding. Pyridoxal 5'-phosphate is bound at residue 108–109; that stretch reads GF. Substrate is bound at residue His-133. 3 residues coordinate pyridoxal 5'-phosphate: Ser-179, His-207, and Thr-233. At Lys-236 the chain carries N6-(pyridoxal phosphate)lysine. A substrate-binding site is contributed by Thr-352.

The protein belongs to the class-II pyridoxal-phosphate-dependent aminotransferase family. BioF subfamily. In terms of assembly, homodimer. Pyridoxal 5'-phosphate is required as a cofactor.

It carries out the reaction 6-carboxyhexanoyl-[ACP] + L-alanine + H(+) = (8S)-8-amino-7-oxononanoate + holo-[ACP] + CO2. Its pathway is cofactor biosynthesis; biotin biosynthesis. Its function is as follows. Catalyzes the decarboxylative condensation of pimeloyl-[acyl-carrier protein] and L-alanine to produce 8-amino-7-oxononanoate (AON), [acyl-carrier protein], and carbon dioxide. The chain is 8-amino-7-oxononanoate synthase from Escherichia coli O157:H7.